Here is a 637-residue protein sequence, read N- to C-terminus: Chaperone protein HtpG (637 aa).

An a; substrate-binding region spans residues 1–345 (MSQQETHGFQ…SNDLPLNVSR (345 aa)). The interval 346–562 (EILQDNHITK…EGEMSSQMIK (217 aa)) is b. The tract at residues 563-637 (LMQAAGQPVP…MNQMLLANLK (75 aa)) is c.

The protein belongs to the heat shock protein 90 family. As to quaternary structure, homodimer.

It is found in the cytoplasm. Functionally, molecular chaperone. Has ATPase activity. The polypeptide is Chaperone protein HtpG (Shewanella sp. (strain MR-7)).